Consider the following 428-residue polypeptide: Adenylosuccinate synthetase (428 aa).

GTP contacts are provided by residues 12-18 (GDEGKGK) and 40-42 (GHT). The Proton acceptor role is filled by aspartate 13. The Mg(2+) site is built by aspartate 13 and glycine 40. IMP is bound by residues 13–16 (DEGK), 38–41 (NAGH), threonine 130, arginine 144, glutamine 225, threonine 240, and arginine 304. The active-site Proton donor is histidine 41. Residue 300–306 (VTTGRSR) participates in substrate binding. Residues arginine 306, 332 to 334 (KID), and 414 to 416 (GVG) each bind GTP.

Belongs to the adenylosuccinate synthetase family. Homodimer. Mg(2+) serves as cofactor.

The protein localises to the cytoplasm. The catalysed reaction is IMP + L-aspartate + GTP = N(6)-(1,2-dicarboxyethyl)-AMP + GDP + phosphate + 2 H(+). It functions in the pathway purine metabolism; AMP biosynthesis via de novo pathway; AMP from IMP: step 1/2. In terms of biological role, plays an important role in the de novo pathway of purine nucleotide biosynthesis. Catalyzes the first committed step in the biosynthesis of AMP from IMP. The chain is Adenylosuccinate synthetase from Clostridium botulinum (strain Alaska E43 / Type E3).